The chain runs to 534 residues: Inosine-5'-monophosphate dehydrogenase (534 aa).

CBS domains lie at 117-181 (YVMQ…GTPI) and 190-255 (TTPI…PMAS). Residues 292 to 294 (DSS) and 342 to 344 (GMG) each bind NAD(+). 2 residues coordinate K(+): glycine 344 and glycine 346. Residue serine 347 participates in IMP binding. Cysteine 349 serves as a coordination point for K(+). Catalysis depends on cysteine 349, which acts as the Thioimidate intermediate. Residues 382–384 (DGG), 405–406 (GG), and 430–434 (YRGMG) contribute to the IMP site. Arginine 448 (proton acceptor) is an active-site residue. Residue glutamine 461 participates in IMP binding. The K(+) site is built by glutamate 520, glycine 521, and glycine 522.

Belongs to the IMPDH/GMPR family. In terms of assembly, homotetramer. K(+) is required as a cofactor.

Its subcellular location is the cytoplasm. It carries out the reaction IMP + NAD(+) + H2O = XMP + NADH + H(+). It functions in the pathway purine metabolism; XMP biosynthesis via de novo pathway; XMP from IMP: step 1/1. With respect to regulation, mycophenolic acid (MPA) is a non-competitive inhibitor that prevents formation of the closed enzyme conformation by binding to the same site as the amobile flap. In contrast, mizoribine monophosphate (MZP) is a competitive inhibitor that induces the closed conformation. MPA is a potent inhibitor of mammalian IMPDHs but a poor inhibitor of the bacterial enzymes. MZP is a more potent inhibitor of bacterial IMPDH. Functionally, catalyzes the conversion of inosine 5'-phosphate (IMP) to xanthosine 5'-phosphate (XMP), the first committed and rate-limiting step in the de novo synthesis of guanine nucleotides, and therefore plays an important role in the regulation of cell growth. In Caenorhabditis elegans, this protein is Inosine-5'-monophosphate dehydrogenase.